A 346-amino-acid polypeptide reads, in one-letter code: Ribosomal RNA small subunit methyltransferase H (346 aa).

S-adenosyl-L-methionine is bound by residues 47–49, D65, F92, D113, and Q120; that span reads GGY. A disordered region spans residues 294-346; that stretch reads AVEPGSDEVAGNPRARSAKLRAAERTDAPAHPDGDLAGLLPADLSQRRGRRRS. Residues 314-327 show a composition bias toward basic and acidic residues; sequence RAAERTDAPAHPDG. Residues 328–337 are compositionally biased toward low complexity; that stretch reads DLAGLLPADL.

Belongs to the methyltransferase superfamily. RsmH family.

The protein localises to the cytoplasm. The enzyme catalyses cytidine(1402) in 16S rRNA + S-adenosyl-L-methionine = N(4)-methylcytidine(1402) in 16S rRNA + S-adenosyl-L-homocysteine + H(+). Its function is as follows. Specifically methylates the N4 position of cytidine in position 1402 (C1402) of 16S rRNA. This is Ribosomal RNA small subunit methyltransferase H from Azorhizobium caulinodans (strain ATCC 43989 / DSM 5975 / JCM 20966 / LMG 6465 / NBRC 14845 / NCIMB 13405 / ORS 571).